The primary structure comprises 315 residues: Thioredoxin reductase (315 aa).

Position 45 to 52 (45 to 52) interacts with FAD; sequence EGNTPGGK. A disulfide bridge links C145 with C148. 288–297 is an FAD binding site; the sequence is DCRSKSFRQI.

It belongs to the class-II pyridine nucleotide-disulfide oxidoreductase family. In terms of assembly, homodimer. FAD serves as cofactor.

The protein localises to the cytoplasm. The enzyme catalyses [thioredoxin]-dithiol + NADP(+) = [thioredoxin]-disulfide + NADPH + H(+). The sequence is that of Thioredoxin reductase (trxB) from Mycoplasma genitalium (strain ATCC 33530 / DSM 19775 / NCTC 10195 / G37) (Mycoplasmoides genitalium).